Here is a 456-residue protein sequence, read N- to C-terminus: Serine/threonine-protein kinase meng-po (456 aa).

The segment at 15 to 78 (RSFGDGGSTN…RSSIYKKPDK (64 aa)) is disordered. A compositionally biased stretch (low complexity) spans 22–55 (STNSRNSNNNSSTCTNHNNQKRCSTPLTPTSTST). Positions 101–367 (YNIEKTLAEG…VAKYMKDRWV (267 aa)) constitute a Protein kinase domain. ATP-binding positions include 107–115 (LAEGCFAKI) and lysine 130. Aspartate 221 functions as the Proton acceptor in the catalytic mechanism. A Phosphoserine; by PKA modification is found at serine 334.

This sequence belongs to the protein kinase superfamily. Ser/Thr protein kinase family. Mg(2+) serves as cofactor. In terms of tissue distribution, expressed in the mushroom bodies (at protein level).

It catalyses the reaction L-seryl-[protein] + ATP = O-phospho-L-seryl-[protein] + ADP + H(+). It carries out the reaction L-threonyl-[protein] + ATP = O-phospho-L-threonyl-[protein] + ADP + H(+). Activated by Pka-C1-mediated phosphorylation of Ser-334. Serine/threonine-protein kinase involved in memory formation. Together with the cAMP-dependent protein kinase A Pka-C1, promotes long-term memory (LTM) by regulating CrebB stability and activity. Involved in the maintenance of anesthesia-sensitive memory (ASM) which includes short-term memory (STM) and middle-term memory (MTM). This Drosophila melanogaster (Fruit fly) protein is Serine/threonine-protein kinase meng-po.